Here is an 86-residue protein sequence, read N- to C-terminus: Putative regulatory protein Desal_2819 (86 aa).

It belongs to the RemA family.

The polypeptide is Putative regulatory protein Desal_2819 (Maridesulfovibrio salexigens (strain ATCC 14822 / DSM 2638 / NCIMB 8403 / VKM B-1763) (Desulfovibrio salexigens)).